A 273-amino-acid polypeptide reads, in one-letter code: Dermonecrotic toxin LdSicTox-alphaIB3b (273 aa).

H5 is an active-site residue. Mg(2+) is bound by residues E25 and D27. H41 functions as the Nucleophile in the catalytic mechanism. Disulfide bonds link C45–C51 and C47–C190. A Mg(2+)-binding site is contributed by D85.

Belongs to the arthropod phospholipase D family. Class II subfamily. Mg(2+) is required as a cofactor. Expressed by the venom gland.

It localises to the secreted. It carries out the reaction an N-(acyl)-sphingosylphosphocholine = an N-(acyl)-sphingosyl-1,3-cyclic phosphate + choline. It catalyses the reaction an N-(acyl)-sphingosylphosphoethanolamine = an N-(acyl)-sphingosyl-1,3-cyclic phosphate + ethanolamine. The catalysed reaction is a 1-acyl-sn-glycero-3-phosphocholine = a 1-acyl-sn-glycero-2,3-cyclic phosphate + choline. The enzyme catalyses a 1-acyl-sn-glycero-3-phosphoethanolamine = a 1-acyl-sn-glycero-2,3-cyclic phosphate + ethanolamine. In terms of biological role, dermonecrotic toxins cleave the phosphodiester linkage between the phosphate and headgroup of certain phospholipids (sphingolipid and lysolipid substrates), forming an alcohol (often choline) and a cyclic phosphate. This toxin acts on sphingomyelin (SM). It may also act on ceramide phosphoethanolamine (CPE), lysophosphatidylcholine (LPC) and lysophosphatidylethanolamine (LPE), but not on lysophosphatidylserine (LPS), and lysophosphatidylglycerol (LPG). It acts by transphosphatidylation, releasing exclusively cyclic phosphate products as second products. Induces dermonecrosis, hemolysis, increased vascular permeability, edema, inflammatory response, and platelet aggregation. This chain is Dermonecrotic toxin LdSicTox-alphaIB3b, found in Loxosceles deserta (Desert recluse spider).